The chain runs to 283 residues: Serine/threonine-protein phosphatase Pgam5, mitochondrial (283 aa).

A helical transmembrane segment spans residues 7–23; the sequence is MYGLPSAAVAVGTALLN.

The protein belongs to the phosphoglycerate mutase family. BPG-dependent PGAM subfamily. In terms of assembly, interacts with skn-1.

Its subcellular location is the mitochondrion outer membrane. It carries out the reaction O-phospho-L-seryl-[protein] + H2O = L-seryl-[protein] + phosphate. The catalysed reaction is O-phospho-L-threonyl-[protein] + H2O = L-threonyl-[protein] + phosphate. Its function is as follows. Displays phosphatase activity for serine/threonine residues. Has apparently no phosphoglycerate mutase activity. This Caenorhabditis briggsae protein is Serine/threonine-protein phosphatase Pgam5, mitochondrial (pgam-5).